The chain runs to 562 residues: SLAIN motif-containing protein-like (562 aa).

Disordered regions lie at residues 292–313 (QDYASSSASVSRRSSSASLHSL), 344–381 (HRYSPSPLSSPRCQSPSAAESRATTSRIRPPRRSIQNH), and 409–562 (SLEA…DGCY). Composition is skewed to low complexity over residues 295 to 311 (ASSSASVSRRSSSASLH) and 345 to 355 (RYSPSPLSSPR). Polar residues-rich tracts occupy residues 356-370 (CQSPSAAESRATTSR), 424-442 (QGPSSRLTRMQQPSTSTPP), 465-531 (VSTS…STVP), and 539-553 (SRRSLPSAKMNSTLG).

Belongs to the SLAIN motif-containing family.

The chain is SLAIN motif-containing protein-like from Xenopus laevis (African clawed frog).